Reading from the N-terminus, the 1213-residue chain is Genetic suppressor element 1 (1213 aa).

The tract at residues 1–154 (MKGMSHEPKS…GSRGSSSGRE (154 aa)) is disordered. Ser10 carries the post-translational modification Phosphoserine. Over residues 15 to 33 (MLSTATRTTATVNPLTPSP) the composition is skewed to polar residues. 2 stretches are compositionally biased toward low complexity: residues 51–63 (SAQAAPSSSFAAA) and 76–89 (GSSLSSESSPVSSP). Phosphoserine is present on residues Ser84 and Ser95. Positions 103-114 (VPMGPIIVPPGG) are enriched in low complexity. At Arg305 the chain carries Asymmetric dimethylarginine. Positions 319 to 402 (HSERMSSLSA…REKELLAAKA (84 aa)) form a coiled coil. A disordered region spans residues 326 to 384 (LSAERLQMDEELRREREREREREREADREREKEREREQREKEREKELEREREKEREREL). Over residues 331-384 (LQMDEELRREREREREREREADREREKEREREQREKEREKELEREREKEREREL) the composition is skewed to basic and acidic residues. Thr433 carries the phosphothreonine modification. Lys496 is modified (N6-acetyllysine). Disordered regions lie at residues 527-579 (LDLG…QHTV) and 630-719 (SEKA…TARG). Basic and acidic residues-rich tracts occupy residues 537–560 (EAEHRPESTRPGTNRHEQGSREPP) and 630–643 (SEKAEEPRKREATP). Over residues 648-657 (QPPPPPPPPR) the composition is skewed to pro residues. A compositionally biased stretch (polar residues) spans 681 to 700 (STQTILGQQRPSLSQATSFG). Lys739 carries the N6-acetyllysine modification. Phosphoserine occurs at positions 766, 826, 828, and 857. Disordered stretches follow at residues 816–858 (RKRR…NNSP), 898–979 (LSAA…EAPG), and 1065–1118 (ELQS…PRRQ). Over residues 847 to 858 (TRYSPDEMNNSP) the composition is skewed to polar residues. The residue at position 905 (Thr905) is a Phosphothreonine. A Phosphoserine modification is found at Ser907. Positions 1065 to 1081 (ELQSSSRVPLPQHNGQQ) are enriched in polar residues. Residues 1093 to 1197 (QEADQDSEED…ELDHLRKCLA (105 aa)) are a coiled coil. Residues 1095–1112 (ADQDSEEDSEEDSEEEAE) are compositionally biased toward acidic residues. Residue Ser1099 is modified to Phosphoserine.

May be a component of a BHC histone deacetylase complex that contains HDAC1, HDAC2, HMG20B/BRAF35, KDM1A, RCOR1/CoREST, PHF21A/BHC80, ZMYM2, ZNF217, ZMYM3, GSE1 and GTF2I.

This is Genetic suppressor element 1 (Gse1) from Mus musculus (Mouse).